Consider the following 63-residue polypeptide: Adipokinetic prohormone type 1 (63 aa).

An N-terminal signal peptide occupies residues 1-22 (MVQRCLVVALLVVVVAAALCSA). Pyrrolidone carboxylic acid is present on glutamine 23. At threonine 32 the chain carries Threonine amide.

It belongs to the AKH/HRTH/RPCH family. As to quaternary structure, adipokinetic hormone precursor-related peptide (APRP) can form three type of disulfide-bond dimers: p1 (alpha-alpha), p2 (alpha-beta), and p3 (beta-beta).

The protein localises to the secreted. Its function is as follows. This hormone, released from cells in the corpora cardiaca, causes release of diglycerides from the fat body and stimulation of muscles to use these diglycerides as an energy source during energy-demanding processes. In Schistocerca gregaria (Desert locust), this protein is Adipokinetic prohormone type 1.